A 243-amino-acid chain; its full sequence is Phosphoadenosine 5'-phosphosulfate reductase (243 aa).

C239 acts as the Nucleophile; cysteine thiosulfonate intermediate in catalysis.

The protein belongs to the PAPS reductase family. CysH subfamily.

The protein localises to the cytoplasm. The enzyme catalyses [thioredoxin]-disulfide + sulfite + adenosine 3',5'-bisphosphate + 2 H(+) = [thioredoxin]-dithiol + 3'-phosphoadenylyl sulfate. Its pathway is sulfur metabolism; hydrogen sulfide biosynthesis; sulfite from sulfate: step 3/3. Catalyzes the formation of sulfite from phosphoadenosine 5'-phosphosulfate (PAPS) using thioredoxin as an electron donor. The chain is Phosphoadenosine 5'-phosphosulfate reductase from Proteus mirabilis (strain HI4320).